Consider the following 284-residue polypeptide: Pantothenate synthetase (284 aa).

Met-30–His-37 is a binding site for ATP. Catalysis depends on His-37, which acts as the Proton donor. (R)-pantoate is bound at residue Gln-61. Gln-61 contacts beta-alanine. Gly-149–Asp-152 contributes to the ATP binding site. Gln-155 serves as a coordination point for (R)-pantoate. Residues Ile-178 and Leu-186–Arg-189 each bind ATP.

The protein belongs to the pantothenate synthetase family. As to quaternary structure, homodimer.

The protein resides in the cytoplasm. It carries out the reaction (R)-pantoate + beta-alanine + ATP = (R)-pantothenate + AMP + diphosphate + H(+). It participates in cofactor biosynthesis; (R)-pantothenate biosynthesis; (R)-pantothenate from (R)-pantoate and beta-alanine: step 1/1. In terms of biological role, catalyzes the condensation of pantoate with beta-alanine in an ATP-dependent reaction via a pantoyl-adenylate intermediate. This Salmonella paratyphi B (strain ATCC BAA-1250 / SPB7) protein is Pantothenate synthetase.